A 681-amino-acid chain; its full sequence is MSSPKNEMYYSLLEWFKTLNLNAPHSDAESLADGVALAQALNQFAPESFTDGWLSKIKPGAVGSNWRLRMSNLKKVAQSVYDYYSEVLNYSLGDFAKPDVQRIAEKCDLGELERLLQLVLGCAVNCTNKQSYITEIMSLEEELQANIMRALQELESTRNASSSPEAGGVVSSLSRSSLSGILDGKALQEERDAMAQKCFETEKKMLLLIDEKTNLQQELQKLQQEVSRMEHSSTAIGDDGVSLGPVQTGSVRYNDLRRQLDLLKEELLQSEGAREDLKLKAHQQETDLLHMQIRIDELMKSSAEVTTLKDEVDVLRESNDKLKICEAQLDTYKKKLEDYNDLKKQVRILEERSADYVQQNAQFEEDAKRYANTKGQVELFKKEIQDLHAKLDNESSKNVKLEFDNKNLESKNLALQRAKDSLLKERDNLREVVDELKCGQLSSSSALAGNTVSTELQPLATVDKLQRLEAENKALREGQGGQTALAQLLDEANKRNEHLREQLKTANERILSLSHATQSDDPIFKENEFGKQIKQLMELNEQKTLQLEEAVTQSSTMQCKVTQLETNLAAREQEILAYDAKYRKCVEKAKEVIKSIDPRIASALDASVLEKNAEVVEEEPKPKMTVMEEQLMTSAFYRLGVNAQRDAIDSKLAILMGSGQTFLARQRQSAPRKSLSAMKSK.

The region spanning 6 to 123 (NEMYYSLLEW…RLLQLVLGCA (118 aa)) is the Calponin-homology (CH) domain. Coiled-coil stretches lie at residues 135-439 (EIMS…LKCG) and 482-584 (QTAL…KYRK).

Belongs to the hook family. Homodimer. Interacts with microtubules via its N-terminus.

It localises to the cytoplasm. The protein localises to the cytoskeleton. It is found in the endosome. The protein resides in the synapse. In terms of biological role, involved in endocytic trafficking by stabilizing organelles of the endocytic pathway. Probably acts as a cytoskeletal linker protein required to tether endosome vesicles to the cytoskeleton. Involved in modulation of endocytosis at stages required for down-regulation of membrane proteins that control synapse size. Not involved in synaptic vesicle recycling. Required in R7 cells for boss endocytosis into multivesicular bodies (MVBs). Has a role in regulating adult longevity. This is Protein hook from Drosophila ananassae (Fruit fly).